Consider the following 428-residue polypeptide: MSDVAVMILAGGQGERLSILSRQRAKPAVPFGGKYRIIDFALSNCVNSGLYDVAVLTQYRPHSLNEHIGHGRPWDLDRERNGGVVILQPYLGRSTSGWYRGTADAVYHNLFYITRRPYRDVLILAGDHVYAMDYRPMIAQHRERCADVTIAVQPVDWREASRFGVVIVAEDGWVVDFEEKPERPRSNLASMGIYLFRRNLLLDLFTRDHPDAPEFIDFGRDVIPYLIRTARVATYRFDGYWQDVGTVQSYWEANMALLEDEPKLNLYDPNWRIHTRSEERPPAKILEGATVIRSLLSNGCIVEGATVIRSILSPGVIVKAGAVVRDSIVMTDSVIGPGAVVDRCIIDKHVTIGANAYLGWGDDNSPNWLEPSRLNTGITLVGRNAVVPPGVRIGRNVLIGPEVKESDFPGAVVPSGETVNPIATVVWS.

Alpha-D-glucose 1-phosphate-binding positions include Tyr-99, Gly-164, 179–180, and Ser-190; that span reads EK.

This sequence belongs to the bacterial/plant glucose-1-phosphate adenylyltransferase family. In terms of assembly, homotetramer.

The catalysed reaction is alpha-D-glucose 1-phosphate + ATP + H(+) = ADP-alpha-D-glucose + diphosphate. It participates in glycan biosynthesis; glycogen biosynthesis. Involved in the biosynthesis of ADP-glucose, a building block required for the elongation reactions to produce glycogen. Catalyzes the reaction between ATP and alpha-D-glucose 1-phosphate (G1P) to produce pyrophosphate and ADP-Glc. The polypeptide is Glucose-1-phosphate adenylyltransferase (Thermomicrobium roseum (strain ATCC 27502 / DSM 5159 / P-2)).